A 490-amino-acid polypeptide reads, in one-letter code: Glutamate--tRNA ligase 2 (490 aa).

The short motif at P33–G43 is the 'HIGH' region element. The 'KMSKS' region signature appears at K262–R266. An ATP-binding site is contributed by K265.

The protein belongs to the class-I aminoacyl-tRNA synthetase family. Glutamate--tRNA ligase type 1 subfamily. Monomer.

The protein resides in the cytoplasm. It catalyses the reaction tRNA(Glu) + L-glutamate + ATP = L-glutamyl-tRNA(Glu) + AMP + diphosphate. Its function is as follows. Catalyzes the attachment of glutamate to tRNA(Glu) in a two-step reaction: glutamate is first activated by ATP to form Glu-AMP and then transferred to the acceptor end of tRNA(Glu). The chain is Glutamate--tRNA ligase 2 from Parvibaculum lavamentivorans (strain DS-1 / DSM 13023 / NCIMB 13966).